Here is a 101-residue protein sequence, read N- to C-terminus: uncharacterized protein (101 aa).

Transmembrane regions (helical) follow at residues 3-23 (IVYE…LFLF) and 39-59 (AFLS…LIFF).

The protein resides in the membrane. This is an uncharacterized protein from Saccharomyces cerevisiae (strain ATCC 204508 / S288c) (Baker's yeast).